A 42-amino-acid chain; its full sequence is Conodipine-M beta chain (42 aa).

As to quaternary structure, heterodimer of an alpha and a beta chains; probably disulfide-linked. In terms of tissue distribution, expressed by the venom duct.

It is found in the secreted. Heterodimer: conodipine-M catalyzes the calcium-dependent hydrolysis of the 2-acyl groups in 3-sn-phosphoglycerides. This activity may be supported by the alpha chain. Conodipine-M inhibits the binding of isradipine (a ligand specific for L-type calcium channel) to L-type calcium channels. In Conus magus (Magical cone), this protein is Conodipine-M beta chain.